The chain runs to 1033 residues: Integrin alpha-IIb (1033 aa).

A signal peptide spans 1–31; it reads MARASCAWHSLWLLQWTPLFLGPSAVPPVWA. Over 32-988 the chain is Extracellular; that stretch reads LNLDSEKFSV…TQLLRALEER (957 aa). FG-GAP repeat units follow at residues 35 to 96, 109 to 173, 184 to 237, 252 to 304, 305 to 370, 372 to 431, and 434 to 495; these read DSEK…GGKC, NLGF…GRAE, SVYA…ISSY, TYDN…DSYY, QPLH…PQAL, TPTL…GLSP, and SQVL…VQDS. Residues asparagine 46 and asparagine 75 are each glycosylated (N-linked (GlcNAc...) asparagine). Disulfide bonds link cysteine 87-cysteine 96, cysteine 138-cysteine 161, and cysteine 177-cysteine 197. 19 residues coordinate Ca(2+): glutamate 273, aspartate 275, aspartate 277, threonine 280, glutamate 282, aspartate 327, asparagine 329, aspartate 331, arginine 333, aspartate 335, aspartate 395, aspartate 399, tyrosine 401, aspartate 403, aspartate 456, aspartate 458, asparagine 460, tyrosine 462, and aspartate 464. 2 disulfide bridges follow: cysteine 503/cysteine 514 and cysteine 520/cysteine 575. Asparagine 600 is a glycosylation site (N-linked (GlcNAc...) asparagine). 4 cysteine pairs are disulfide-bonded: cysteine 632–cysteine 638, cysteine 704–cysteine 717, cysteine 856–cysteine 916, and cysteine 905–cysteine 911. A glycan (N-linked (GlcNAc...) asparagine) is linked at asparagine 710. Asparagine 957 carries N-linked (GlcNAc...) asparagine glycosylation. The helical transmembrane segment at 989-1014 threads the bilayer; sequence AIPVWWVLVGVLGGLLLLTLLVLAMW. The Cytoplasmic segment spans residues 1015–1033; that stretch reads KAGFFKRNRPPLEEDEEEE. The short motif at 1017 to 1021 is the GFFKR motif element; it reads GFFKR.

The protein belongs to the integrin alpha chain family. In terms of assembly, heterodimer of an alpha and a beta subunit. The alpha subunit is composed of a heavy and a light chain linked by a disulfide bond. Alpha-IIb associates with beta-3. Directly interacts with RNF181. Interacts (via C-terminus cytoplasmic tail region) with CIB1; the interaction is direct and calcium-dependent. Interacts (via C-terminus cytoplasmic tail region) with CIB2, CIB3 and CIB4; the interactions are stabilized/increased in a calcium and magnesium-dependent manner. ITGA2B:ITGB3 interacts with PPIA/CYPA; the interaction is ROS and PPIase activity-dependent and is increased in the presence of thrombin. ITGA2B:ITGB3 interacts with SELP (via C-type lectin domain); the interaction mediates cell-cell interaction and adhesion. In terms of processing, cleaved by ELANE; the cleavage promotes activation of platelet fibrinogen receptor integrin alpha-IIb/beta-3.

It is found in the membrane. Integrin alpha-IIb/beta-3 is a receptor for fibronectin, fibrinogen, plasminogen, prothrombin, thrombospondin and vitronectin. It recognizes the sequence R-G-D in a wide array of ligands. It recognizes the sequence H-H-L-G-G-G-A-K-Q-A-G-D-V in fibrinogen gamma chain. Following activation integrin alpha-IIb/beta-3 brings about platelet/platelet interaction through binding of soluble fibrinogen. This step leads to rapid platelet aggregation which physically plugs ruptured endothelial cell surface. The chain is Integrin alpha-IIb (Itga2b) from Mus musculus (Mouse).